We begin with the raw amino-acid sequence, 231 residues long: Potassium/proton antiporter CemA (231 aa).

The next 3 helical transmembrane spans lie at 9–29 (FIPLLYLTSIVFLPWWVSFLF), 116–136 (IICFIILSGYSILSNEELIIL), and 191–211 (IISGLVSTFPVILDTIFKYWI).

It belongs to the CemA family.

It localises to the plastid. The protein localises to the chloroplast inner membrane. The catalysed reaction is K(+)(in) + H(+)(out) = K(+)(out) + H(+)(in). Its function is as follows. Contributes to K(+)/H(+) antiport activity by supporting proton efflux to control proton extrusion and homeostasis in chloroplasts in a light-dependent manner to modulate photosynthesis. Prevents excessive induction of non-photochemical quenching (NPQ) under continuous-light conditions. Indirectly promotes efficient inorganic carbon uptake into chloroplasts. This chain is Potassium/proton antiporter CemA, found in Manihot esculenta (Cassava).